The primary structure comprises 177 residues: Peptidyl-tRNA hydrolase (177 aa).

Residue Tyr-18 coordinates tRNA. The Proton acceptor role is filled by His-23. Phe-65, Asn-67, and Asn-113 together coordinate tRNA.

This sequence belongs to the PTH family. As to quaternary structure, monomer.

Its subcellular location is the cytoplasm. It catalyses the reaction an N-acyl-L-alpha-aminoacyl-tRNA + H2O = an N-acyl-L-amino acid + a tRNA + H(+). Functionally, hydrolyzes ribosome-free peptidyl-tRNAs (with 1 or more amino acids incorporated), which drop off the ribosome during protein synthesis, or as a result of ribosome stalling. In terms of biological role, catalyzes the release of premature peptidyl moieties from peptidyl-tRNA molecules trapped in stalled 50S ribosomal subunits, and thus maintains levels of free tRNAs and 50S ribosomes. The sequence is that of Peptidyl-tRNA hydrolase from Corynebacterium efficiens (strain DSM 44549 / YS-314 / AJ 12310 / JCM 11189 / NBRC 100395).